The primary structure comprises 419 residues: MASAFSKLLTGRNASLLFTTLGTSALTTGYLLNRQKVSADAREQHKLFPPSADYPDLRKHNNCMAECLTPTIYAKLRNKMTPSGYTLDQCIQTGVDNPGHPFIKTVGMVAGDEESYEVFADLFDPVIKLRHNGYDPRVMKHPTDLDASKITHGQFDERYVLSSRVRTGRSIRGLSLPPACSRAERREVENVAITALEGLKGDLAGRYYKLSEMTEQDQQRLIDDHFLFDKPVSPLLTCAGMARDWPDARGIWHNYDKTFLIWINEEDHTRVISMEKGGNMKRVFERFCRGLKEVERLIQERGWEFMWNERLGYILTCPSNLGTGLRAGVHVRIPKLSKDPRFSKILENLRLQKRGTGGVDTAAVADVYDISNIDRIGRSEVELVQIVIDGVNYLVDCEKKLERGQDIKVPPPLPQFGRK.

The transit peptide at 1–39 (MASAFSKLLTGRNASLLFTTLGTSALTTGYLLNRQKVSA) directs the protein to the mitochondrion. Positions 40-64 (DAREQHKLFPPSADYPDLRKHNNCM) are cardiolipin-binding. Positions 46–132 (KLFPPSADYP…FDPVIKLRHN (87 aa)) constitute a Phosphagen kinase N-terminal domain. The Phosphagen kinase C-terminal domain maps to 159–401 (YVLSSRVRTG…NYLVDCEKKL (243 aa)). Residues 162-166 (SSRVR) and H225 each bind ATP. A Phosphotyrosine modification is found at Y255. ATP-binding positions include R270, R326, 354 to 359 (RGTGGV), and D369. Phosphothreonine is present on T356.

This sequence belongs to the ATP:guanido phosphotransferase family. As to quaternary structure, exists as an octamer composed of four CKMT2 homodimers.

The protein localises to the mitochondrion inner membrane. It carries out the reaction creatine + ATP = N-phosphocreatine + ADP + H(+). Functionally, reversibly catalyzes the transfer of phosphate between ATP and various phosphogens (e.g. creatine phosphate). Creatine kinase isoenzymes play a central role in energy transduction in tissues with large, fluctuating energy demands, such as skeletal muscle, heart, brain and spermatozoa. The sequence is that of Creatine kinase S-type, mitochondrial (Ckmt2) from Mus musculus (Mouse).